Reading from the N-terminus, the 140-residue chain is Nucleoside diphosphate kinase (140 aa).

ATP-binding residues include K11, F59, R87, T93, R104, and N114. H117 (pros-phosphohistidine intermediate) is an active-site residue.

It belongs to the NDK family. Homotetramer. The cofactor is Mg(2+).

The protein resides in the cytoplasm. It carries out the reaction a 2'-deoxyribonucleoside 5'-diphosphate + ATP = a 2'-deoxyribonucleoside 5'-triphosphate + ADP. The enzyme catalyses a ribonucleoside 5'-diphosphate + ATP = a ribonucleoside 5'-triphosphate + ADP. Its function is as follows. Major role in the synthesis of nucleoside triphosphates other than ATP. The ATP gamma phosphate is transferred to the NDP beta phosphate via a ping-pong mechanism, using a phosphorylated active-site intermediate. This is Nucleoside diphosphate kinase from Ruegeria sp. (strain TM1040) (Silicibacter sp.).